The chain runs to 179 residues: Large ribosomal subunit protein uL6 (179 aa).

This sequence belongs to the universal ribosomal protein uL6 family. In terms of assembly, part of the 50S ribosomal subunit.

This protein binds to the 23S rRNA, and is important in its secondary structure. It is located near the subunit interface in the base of the L7/L12 stalk, and near the tRNA binding site of the peptidyltransferase center. This chain is Large ribosomal subunit protein uL6, found in Clostridium novyi (strain NT).